The primary structure comprises 101 residues: Small ribosomal subunit protein uS14A (101 aa).

2 stretches are compositionally biased toward basic and acidic residues: residues 28–44 and 61–70; these read KETI…RAEA and RNRDAADGRP. Positions 28-74 are disordered; that stretch reads KETIRRPSSSEDERAEARAALQRLPRDASPVRLRNRDAADGRPRGHL.

It belongs to the universal ribosomal protein uS14 family. Part of the 30S ribosomal subunit. Contacts proteins S3 and S10.

Binds 16S rRNA, required for the assembly of 30S particles and may also be responsible for determining the conformation of the 16S rRNA at the A site. The chain is Small ribosomal subunit protein uS14A from Rhodococcus jostii (strain RHA1).